We begin with the raw amino-acid sequence, 269 residues long: MLPYPQIDPVAVALGPLKIHWYGLMYLIGIGGAWLLASRRLNRFDPTWSREKLSDLVFWLSMGVIVGGRLGYVLFYDLHAYLANPTLIFEVWKGGMSFHGGFIGVMLAALWFGKRNNKSFFELMDFVAPLVPIGLGAGRIGNFINAELWGKATDVPWAMVFPPFSDPAQLPRHPSQLYQFALEGVALFVILWLYSRKPRPTMAVSGMFALFYGIFRFIVEFVRVPDAQLGYIAFGWLTMGQLLCVPMIVGGLFLIWLAYNRKPTAKPAV.

7 helical membrane passes run 17 to 37 (LKIH…WLLA), 56 to 76 (LVFW…VLFY), 92 to 112 (WKGG…ALWF), 120 to 140 (FFEL…AGRI), 174 to 194 (PSQL…LWLY), 202 to 222 (MAVS…VEFV), and 237 to 257 (LTMG…LIWL). Arg-139 is an a 1,2-diacyl-sn-glycero-3-phospho-(1'-sn-glycerol) binding site.

The protein belongs to the Lgt family.

Its subcellular location is the cell inner membrane. It catalyses the reaction L-cysteinyl-[prolipoprotein] + a 1,2-diacyl-sn-glycero-3-phospho-(1'-sn-glycerol) = an S-1,2-diacyl-sn-glyceryl-L-cysteinyl-[prolipoprotein] + sn-glycerol 1-phosphate + H(+). Its pathway is protein modification; lipoprotein biosynthesis (diacylglyceryl transfer). Its function is as follows. Catalyzes the transfer of the diacylglyceryl group from phosphatidylglycerol to the sulfhydryl group of the N-terminal cysteine of a prolipoprotein, the first step in the formation of mature lipoproteins. The chain is Phosphatidylglycerol--prolipoprotein diacylglyceryl transferase from Pseudomonas putida (strain W619).